Here is a 321-residue protein sequence, read N- to C-terminus: Lipoyl synthase (321 aa).

[4Fe-4S] cluster-binding residues include cysteine 68, cysteine 73, cysteine 79, cysteine 94, cysteine 98, cysteine 101, and serine 308. Positions phenylalanine 80 to threonine 297 constitute a Radical SAM core domain.

Belongs to the radical SAM superfamily. Lipoyl synthase family. The cofactor is [4Fe-4S] cluster.

It is found in the cytoplasm. The catalysed reaction is [[Fe-S] cluster scaffold protein carrying a second [4Fe-4S](2+) cluster] + N(6)-octanoyl-L-lysyl-[protein] + 2 oxidized [2Fe-2S]-[ferredoxin] + 2 S-adenosyl-L-methionine + 4 H(+) = [[Fe-S] cluster scaffold protein] + N(6)-[(R)-dihydrolipoyl]-L-lysyl-[protein] + 4 Fe(3+) + 2 hydrogen sulfide + 2 5'-deoxyadenosine + 2 L-methionine + 2 reduced [2Fe-2S]-[ferredoxin]. It participates in protein modification; protein lipoylation via endogenous pathway; protein N(6)-(lipoyl)lysine from octanoyl-[acyl-carrier-protein]: step 2/2. In terms of biological role, catalyzes the radical-mediated insertion of two sulfur atoms into the C-6 and C-8 positions of the octanoyl moiety bound to the lipoyl domains of lipoate-dependent enzymes, thereby converting the octanoylated domains into lipoylated derivatives. This Shewanella frigidimarina (strain NCIMB 400) protein is Lipoyl synthase.